The following is a 243-amino-acid chain: Voltage-gated monoatomic cation channel TMEM109 (243 aa).

The N-terminal stretch at 1–33 is a signal peptide; it reads MAGAHSNPSWSRHLFKAVLMVLGALLLVHSASA. Residues 34 to 83 lie on the Lumenal side of the membrane; the sequence is QTHREFASPGQQKRESSADILTEIGRSLKETLDTWLGPETMHVISETLLQ. A helical transmembrane segment spans residues 84–104; that stretch reads VMWAISSAISVACFALSGIAA. Residues 105–135 are Cytoplasmic-facing; sequence QLLSALGLDGEQLTQVLKLSPSQVQTLLLWG. A helical membrane pass occupies residues 136–156; sequence AAALVIYWLLSLLLGLVLALL. Topologically, residues 157-185 are lumenal; it reads GRILGGLKLVLFVAGFVGLVRSVPDPSTR. Residues 186–205 traverse the membrane as a helical segment; it reads ALLLLALLTVFALLSRLTGS. Residues 206–243 lie on the Cytoplasmic side of the membrane; the sequence is RSSGTHLEAKVRGLERQIEELRGRQRRAAKIPRSMEEE.

In terms of assembly, homooligomer. Interacts with CRYAB; in the cellular response to DNA damage.

Its subcellular location is the nucleus outer membrane. It is found in the endoplasmic reticulum membrane. The protein resides in the sarcoplasmic reticulum membrane. The enzyme catalyses K(+)(in) = K(+)(out). It catalyses the reaction Ca(2+)(in) = Ca(2+)(out). Functions as a voltage-gated monoatomic cation channel permeable to both potassium and calcium. Plays a role in the cellular response to DNA damage. This is Voltage-gated monoatomic cation channel TMEM109 from Rattus norvegicus (Rat).